Here is a 379-residue protein sequence, read N- to C-terminus: Carbamoyl phosphate synthase small chain (379 aa).

Residues Met-1–Glu-189 form a CPSase region. Ser-47, Gly-241, and Gly-243 together coordinate L-glutamine. The Glutamine amidotransferase type-1 domain occupies His-193–Ala-379. Residue Cys-269 is the Nucleophile of the active site. The L-glutamine site is built by Leu-270, Gln-273, Asn-311, Gly-313, and Phe-314. Catalysis depends on residues His-353 and Glu-355.

Belongs to the CarA family. As to quaternary structure, composed of two chains; the small (or glutamine) chain promotes the hydrolysis of glutamine to ammonia, which is used by the large (or ammonia) chain to synthesize carbamoyl phosphate. Tetramer of heterodimers (alpha,beta)4.

It catalyses the reaction hydrogencarbonate + L-glutamine + 2 ATP + H2O = carbamoyl phosphate + L-glutamate + 2 ADP + phosphate + 2 H(+). It carries out the reaction L-glutamine + H2O = L-glutamate + NH4(+). The protein operates within amino-acid biosynthesis; L-arginine biosynthesis; carbamoyl phosphate from bicarbonate: step 1/1. Its pathway is pyrimidine metabolism; UMP biosynthesis via de novo pathway; (S)-dihydroorotate from bicarbonate: step 1/3. Small subunit of the glutamine-dependent carbamoyl phosphate synthetase (CPSase). CPSase catalyzes the formation of carbamoyl phosphate from the ammonia moiety of glutamine, carbonate, and phosphate donated by ATP, constituting the first step of 2 biosynthetic pathways, one leading to arginine and/or urea and the other to pyrimidine nucleotides. The small subunit (glutamine amidotransferase) binds and cleaves glutamine to supply the large subunit with the substrate ammonia. The sequence is that of Carbamoyl phosphate synthase small chain from Vibrio vulnificus (strain YJ016).